Here is a 305-residue protein sequence, read N- to C-terminus: Phospho-N-acetylmuramoyl-pentapeptide-transferase (305 aa).

Helical transmembrane passes span 1 to 21 (MLMV…RASK), 46 to 66 (AGGV…YLSG), 73 to 93 (ELLI…DDWL), 113 to 133 (FPLQ…LASH), 139 to 159 (LGPV…VNAF), 174 to 194 (IIVL…VAVL), 207 to 227 (VFMG…AYIL), 233 to 253 (LLPI…IQVI), and 282 to 302 (VTIR…WLLG).

The protein belongs to the glycosyltransferase 4 family. MraY subfamily. Requires Mg(2+) as cofactor.

Its subcellular location is the cell membrane. The catalysed reaction is UDP-N-acetyl-alpha-D-muramoyl-L-alanyl-gamma-D-glutamyl-meso-2,6-diaminopimeloyl-D-alanyl-D-alanine + di-trans,octa-cis-undecaprenyl phosphate = di-trans,octa-cis-undecaprenyl diphospho-N-acetyl-alpha-D-muramoyl-L-alanyl-D-glutamyl-meso-2,6-diaminopimeloyl-D-alanyl-D-alanine + UMP. The protein operates within cell wall biogenesis; peptidoglycan biosynthesis. Functionally, catalyzes the initial step of the lipid cycle reactions in the biosynthesis of the cell wall peptidoglycan: transfers peptidoglycan precursor phospho-MurNAc-pentapeptide from UDP-MurNAc-pentapeptide onto the lipid carrier undecaprenyl phosphate, yielding undecaprenyl-pyrophosphoryl-MurNAc-pentapeptide, known as lipid I. This chain is Phospho-N-acetylmuramoyl-pentapeptide-transferase, found in Deinococcus deserti (strain DSM 17065 / CIP 109153 / LMG 22923 / VCD115).